The following is a 422-amino-acid chain: Phagosome assembly factor 1 (422 aa).

This sequence belongs to the PHAF1 family. Interacts with BCAS3; the interaction is requrired for the association with the phagophore.

The protein resides in the cytoplasm. It localises to the preautophagosomal structure. In terms of biological role, plays a regulatory role in autophagic activity. In complex with BCAS3, associates with the autophagosome formation site during both non-selective and selective autophagy. This is Phagosome assembly factor 1 from Mus musculus (Mouse).